A 505-amino-acid chain; its full sequence is Maturase K (505 aa).

Belongs to the intron maturase 2 family. MatK subfamily.

It localises to the plastid. It is found in the chloroplast. Usually encoded in the trnK tRNA gene intron. Probably assists in splicing its own and other chloroplast group II introns. This chain is Maturase K, found in Gomphrena pulchella (Globe amaranth).